Consider the following 180-residue polypeptide: Large ribosomal subunit protein uL6 (180 aa).

This sequence belongs to the universal ribosomal protein uL6 family. As to quaternary structure, part of the 50S ribosomal subunit.

This protein binds to the 23S rRNA, and is important in its secondary structure. It is located near the subunit interface in the base of the L7/L12 stalk, and near the tRNA binding site of the peptidyltransferase center. The polypeptide is Large ribosomal subunit protein uL6 (Cutibacterium acnes (strain DSM 16379 / KPA171202) (Propionibacterium acnes)).